The sequence spans 380 residues: 1-deoxy-D-xylulose 5-phosphate reductoisomerase (380 aa).

NADPH is bound by residues Thr10, Gly11, Ser12, Ile13, Gly35, Arg36, Asn37, and Asn121. Lys122 serves as a coordination point for 1-deoxy-D-xylulose 5-phosphate. Glu123 serves as a coordination point for NADPH. Asp147 serves as a coordination point for Mn(2+). 1-deoxy-D-xylulose 5-phosphate is bound by residues Ser148, Glu149, Ser173, and His196. Glu149 provides a ligand contact to Mn(2+). An NADPH-binding site is contributed by Gly202. 1-deoxy-D-xylulose 5-phosphate is bound by residues Ser209, Asn214, Lys215, and Glu218. Glu218 contacts Mn(2+).

The protein belongs to the DXR family. Mg(2+) serves as cofactor. Mn(2+) is required as a cofactor.

The enzyme catalyses 2-C-methyl-D-erythritol 4-phosphate + NADP(+) = 1-deoxy-D-xylulose 5-phosphate + NADPH + H(+). Its pathway is isoprenoid biosynthesis; isopentenyl diphosphate biosynthesis via DXP pathway; isopentenyl diphosphate from 1-deoxy-D-xylulose 5-phosphate: step 1/6. Catalyzes the NADPH-dependent rearrangement and reduction of 1-deoxy-D-xylulose-5-phosphate (DXP) to 2-C-methyl-D-erythritol 4-phosphate (MEP). The protein is 1-deoxy-D-xylulose 5-phosphate reductoisomerase of Agathobacter rectalis (strain ATCC 33656 / DSM 3377 / JCM 17463 / KCTC 5835 / VPI 0990) (Eubacterium rectale).